Reading from the N-terminus, the 1497-residue chain is MRSKHVLYIAILFSSIFGGKGIQQNEEFQRYDGWYNNLANSEWGSAGSRLHRDARSYYSDGVYSVNNSLPSARELSDILFKGESGIPNTRGCTTLLAFFSQVVAYEIMQSNGVSCPLETLKIQVPLCDNVFDKECEGKTEIPFTRAKYDKATGNGLNSPREQINERTSWIDGSFIYGTTQPWVSSLRSFKQGRLAEGVPGYPPLNNPHIPLNNPAPPQVHRLMSPDRLFMLGDSRVNENPGLLSFGLILFRWHNYNANQIHREHPDWTDEQIFQAARRLVIASMQKIIAYDFVPGLLGEDVRLSNYTKYMPHVPPGISHAFGAAAFRFPHSIVPPAMLLRKRGNKCEFRTEVGGYPALRLCQNWWNAQDIVKEYSVDEIILGMASQIAERDDNIVVEDLRDYIFGPMHFSRLDVVASSIMRGRDNGVPPYNELRRTFGLAPKTWETMNEDFYKKHTAKVEKLKELYGGNILYLDAYVGGMLEGGENGPGELFKEIIKDQFTRIRDGDRFWFENKLNGLFTDEEVQMIHSITLRDIIKATTDIDETMLQKDVFFFKEGDPCPQPFQVNTTGLEPCVPFMQSTYWTDNDTTYVFTLIGLACVPLICYGIGRYLVNRRIAIGHNSACDSLTTDFANDDCGAKGDIYGVNALEWLQEEYIRQVRIEIENTTLAVKKPRGGILRKIRFETGQKIELFHSMPNPSAMHGPFVLLSQKNNHHLVIRLSSDRDLSKFLDQIRQAASGINAEVIIKDEENSILLSQAITKERRQDRLDLFFREAYAKAFNDSELQDSETSFDSSNDDILNETISREELASAMGMKANNEFVKRMFAMTAKHNEDSLSFNEFLTVLREFVNAPQKQKLQTLFKMCDLEGKNKVLRKDLAELVKSLNQTAGVHITESVQLRLFNEVLHYAGVSNDAKYLTYDDFNALFSDIPDKQPVGLPFNRKNYQPSIGETSSLNSFAVVDRSINSSAPLTLIHKVSAFLETYRQHVFIVFCFVAINLVLFFERFWHYRYMAENRDLRRVMGAGIAITRGAAGALSFCMALILLTVCRNIITLLRETVIAQYIPFDSAIAFHKIVALFAAFWATLHTVGHCVNFYHVGTQSQEGLACLFQEAFFGSNFLPSISYWFFSTITGLTGIALVAVMCIIYVFALPCFIKRAYHAFRLTHLLNIAFYALTLLHGLPKLLDSPKFGYYVVGPIVLFVIDRIIGLMQYYKKLEIVNAEILPSDIIYIEYRRPREFKYKSGQWVTVSSPSISCTFNESHAFSIASSPQDENMKLYIKAVGPWTWKLRSELIRSLNTGSPFPLIHMKGPYGDGNQEWMDYEVAIMVGAGIGVTPYASTLVDLVQRTSSDSFHRVRCRKVYFLWVCSTHKNYEWFVDVLKNVEDQARSGILETHIFVTQTFHKFDLRTTMLYICEKHFRATNSGISMFTGLHAKNHFGRPNFKAFFQFIQSEHKEQSKIGVFSCGPVNLNESIAEGCADANRQRDAPSFAHRFETF.

Residues M1–G21 form the signal peptide. At I22 to D587 the chain is on the extracellular side. The tract at residues E26–Y590 is peroxidase-like; mediates peroxidase activity. N-linked (GlcNAc...) asparagine glycosylation is found at N66, N305, N567, and N586. A helical membrane pass occupies residues T588–G608. The Cytoplasmic portion of the chain corresponds to R609–Q986. EF-hand domains are found at residues A817–A852 and P853–T888. Residues H987–W1007 form a helical membrane-spanning segment. The Extracellular portion of the chain corresponds to H1008–A1024. The chain crosses the membrane as a helical span at residues G1025 to L1045. The Ferric oxidoreductase domain occupies R1030 to M1210. Over T1046–S1068 the chain is Cytoplasmic. Residues A1069 to V1089 traverse the membrane as a helical segment. The Extracellular portion of the chain corresponds to G1090–L1134. The helical transmembrane segment at T1135–I1155 threads the bilayer. The Cytoplasmic portion of the chain corresponds to K1156 to R1163. A helical membrane pass occupies residues L1164 to L1184. Residues L1185 to K1189 lie on the Extracellular side of the membrane. The chain crosses the membrane as a helical span at residues F1190–M1210. One can recognise an FAD-binding FR-type domain in the interval Q1211 to E1318. Topologically, residues Q1211–F1497 are cytoplasmic.

This sequence in the N-terminal section; belongs to the peroxidase family. Interacts with doxa-1 and tsp-15. Interacts with rho-1. Expressed in hypodermal cells.

It localises to the membrane. The enzyme catalyses NADH + O2 + H(+) = H2O2 + NAD(+). The catalysed reaction is NADPH + O2 + H(+) = H2O2 + NADP(+). Peroxidase activity is inhibited by aminobenzohydrazide. Its function is as follows. Plays a role in cuticle biogenesis. In complex with doxa-1 and tsp-15, produces reactive oxygen species (ROS), which are probably used by mlt-7 for tyrosine cross-linking, thus stabilizing cuticular extracellular matrix. May regulate the production of ROS by playing a role in modulating proline catabolism. Required in combination with mlt-7 for correct formation of cross-links in cuticle collagens. Association with the GTPase rho-1 promotes ROS production and this interaction may be modulated by memo-1, in order to control the oxidative stress response and longevity. This Caenorhabditis elegans protein is Dual oxidase 1.